We begin with the raw amino-acid sequence, 204 residues long: Protein GrpE (204 aa).

A compositionally biased stretch (basic and acidic residues) spans 1-12; the sequence is MSNQEKKMHEEE. The segment at 1–37 is disordered; it reads MSNQEKKMHEEELQQQETVEADTEAEAEAVGTDADIE.

Belongs to the GrpE family. In terms of assembly, homodimer.

It is found in the cytoplasm. Participates actively in the response to hyperosmotic and heat shock by preventing the aggregation of stress-denatured proteins, in association with DnaK and GrpE. It is the nucleotide exchange factor for DnaK and may function as a thermosensor. Unfolded proteins bind initially to DnaJ; upon interaction with the DnaJ-bound protein, DnaK hydrolyzes its bound ATP, resulting in the formation of a stable complex. GrpE releases ADP from DnaK; ATP binding to DnaK triggers the release of the substrate protein, thus completing the reaction cycle. Several rounds of ATP-dependent interactions between DnaJ, DnaK and GrpE are required for fully efficient folding. The polypeptide is Protein GrpE (Vibrio proteolyticus (Aeromonas proteolytica)).